Reading from the N-terminus, the 660-residue chain is Zeaxanthin epoxidase, chloroplastic (660 aa).

Residues 1–49 (MYASSARDGIPGKWCNARRKQLPLLISKDFPAELYHSLPCKSLENGHIK) constitute a chloroplast transit peptide. FAD-binding positions include 79–107 (KVLVAGGGIGGLVFALAGKKRGFDVLVFE) and 357–370 (TFSWGKGRVTLLGD). The FHA domain maps to 545–609 (LVLSRDENMP…HGTWFIDNEG (65 aa)).

FAD serves as cofactor.

The protein localises to the plastid. It is found in the chloroplast membrane. Its subcellular location is the chloroplast thylakoid membrane. The enzyme catalyses all-trans-zeaxanthin + 4 reduced [2Fe-2S]-[ferredoxin] + 2 O2 + 4 H(+) = all-trans-violaxanthin + 4 oxidized [2Fe-2S]-[ferredoxin] + 2 H2O. The catalysed reaction is all-trans-zeaxanthin + 2 reduced [2Fe-2S]-[ferredoxin] + O2 + 2 H(+) = all-trans-antheraxanthin + 2 oxidized [2Fe-2S]-[ferredoxin] + H2O. It catalyses the reaction all-trans-antheraxanthin + 2 reduced [2Fe-2S]-[ferredoxin] + O2 + 2 H(+) = all-trans-violaxanthin + 2 oxidized [2Fe-2S]-[ferredoxin] + H2O. It carries out the reaction beta-cryptoxanthin + 2 reduced [2Fe-2S]-[ferredoxin] + O2 + 2 H(+) = (5R,6S)-5,6-epoxi-beta-cryptoxanthin + 2 oxidized [2Fe-2S]-[ferredoxin] + H2O. It participates in plant hormone biosynthesis; abscisate biosynthesis. Functionally, converts zeaxanthin into antheraxanthin and subsequently violaxanthin. Also acts on beta-cryptoxanthin. Involved in the epoxidation of zeaxanthin. This Capsicum annuum (Capsicum pepper) protein is Zeaxanthin epoxidase, chloroplastic.